The following is an 879-amino-acid chain: Metabotropic glutamate receptor 3 (879 aa).

The N-terminal stretch at 1-22 (MKMLTRLQILMLALFSKGFLLS) is a signal peptide. The Extracellular portion of the chain corresponds to 23–576 (LGDHNFMRRE…EDYIKWEDAW (554 aa)). C57 and C99 are joined by a disulfide. Residues R68, S151, and 172–174 (AST) contribute to the L-glutamate site. N209 carries N-linked (GlcNAc...) asparagine glycosylation. Position 222 (Y222) interacts with L-glutamate. 7 cysteine pairs are disulfide-bonded: C240-C527, C361-C373, C412-C419, C509-C528, C513-C531, C534-C546, and C549-C562. N-linked (GlcNAc...) asparagine glycosylation is present at N292. D301 lines the L-glutamate pocket. K389 lines the L-glutamate pocket. N-linked (GlcNAc...) asparagine glycosylation is found at N414 and N439. The helical transmembrane segment at 577–599 (AIGPVTIACLGFLCTCIVITVFI) threads the bilayer. At 600–613 (KHNNTPLVKASGRE) the chain is on the cytoplasmic side. A helical membrane pass occupies residues 614-634 (LCYILLFGVSLSYCMTFFFIA). Residues 635–645 (KPSPVICALRR) lie on the Extracellular side of the membrane. The helical transmembrane segment at 646–664 (LGLGTSFAICYSALLTKTN) threads the bilayer. At 665-688 (CIARIFDGVKNGAQRPKFISPSSQ) the chain is on the cytoplasmic side. Residues 689-709 (VFICLGLILVQIVMVSVWLIL) traverse the membrane as a helical segment. The Extracellular segment spans residues 710 to 734 (ETPGTRRYTLPEKRETVILKCNVKD). A helical membrane pass occupies residues 735–756 (SSMLISLTYDVVLVILCTVYAF). Residues 757-769 (KTRKCPENFNEAK) are Cytoplasmic-facing. The helical transmembrane segment at 770-792 (FIGFTMYTTCIIWLAFLPIFYVT) threads the bilayer. The Extracellular segment spans residues 793 to 802 (SSDYRVQTTT). The chain crosses the membrane as a helical span at residues 803 to 828 (MCISVSLSGFVVLGCLFAPKVHIVLF). At 829 to 879 (QPQKNVVTHRLHLNRFSVSGTATTYSQSSASTYVPTVCNGREVLDSTTSSL) the chain is on the cytoplasmic side.

This sequence belongs to the G-protein coupled receptor 3 family. In terms of assembly, interacts with TAMALIN. Is widely distributed in the CNS. Predominant expression is seen in the neuronal cells of the cerebral cortex, dentate gyrus, and glial cells throughout brain regions.

It localises to the cell membrane. Functionally, G-protein coupled receptor for glutamate. Ligand binding causes a conformation change that triggers signaling via guanine nucleotide-binding proteins (G proteins) and modulates the activity of down-stream effectors. Signaling inhibits adenylate cyclase activity. This is Metabotropic glutamate receptor 3 (Grm3) from Rattus norvegicus (Rat).